Consider the following 437-residue polypeptide: Enolase superfamily member DDB_G0284701 (437 aa).

Lys-217 functions as the Proton acceptor in the catalytic mechanism. Asp-251, Glu-279, and Asp-321 together coordinate Mn(2+). Asp-395 serves as the catalytic Proton donor.

This sequence belongs to the mandelate racemase/muconate lactonizing enzyme family.

This chain is Enolase superfamily member DDB_G0284701, found in Dictyostelium discoideum (Social amoeba).